A 161-amino-acid polypeptide reads, in one-letter code: Ureidoglycolate lyase (161 aa).

It belongs to the ureidoglycolate lyase family. Homodimer. Ni(2+) is required as a cofactor.

The catalysed reaction is (S)-ureidoglycolate = urea + glyoxylate. It participates in nitrogen metabolism; (S)-allantoin degradation. Functionally, catalyzes the catabolism of the allantoin degradation intermediate (S)-ureidoglycolate, generating urea and glyoxylate. Involved in the utilization of allantoin as nitrogen source. The sequence is that of Ureidoglycolate lyase from Rhodobacter capsulatus (strain ATCC BAA-309 / NBRC 16581 / SB1003).